A 221-amino-acid chain; its full sequence is MALWRGLRAVLAVAGLAVAVQLLRGWLGSKSYVFNREEIARLAKEHSGLDYEVAFSKIITELRKKHPGRILPDEDLQWVFVNAGGWMGSMCLLHASLTEYVLLFGTAVDTSGHSGRYWAEISDTILSGTFRQWKEGSTKSEIFYPGDTIVHEVGEATSVQWSAGTWMVEYGRGFIPSTLGFALADTIFSTQDFLTLFYTVKVYGKALLLETSTHLSELGFF.

Topologically, residues 1–4 are lumenal; that stretch reads MALW. The chain crosses the membrane as a helical span at residues 5–27; that stretch reads RGLRAVLAVAGLAVAVQLLRGWL. Residues 28–221 are Cytoplasmic-facing; that stretch reads GSKSYVFNRE…STHLSELGFF (194 aa). The important for ligand-binding stretch occupies residues 96-103; it reads SLTEYVLL. Residues 174–221 are C-terminal hydrophobic region; it reads FIPSTLGFALADTIFSTQDFLTLFYTVKVYGKALLLETSTHLSELGFF.

Belongs to the ERG2 family. Homotrimer.

The protein resides in the nucleus inner membrane. It localises to the nucleus outer membrane. It is found in the nucleus envelope. Its subcellular location is the cytoplasmic vesicle. The protein localises to the endoplasmic reticulum membrane. The protein resides in the membrane. Its function is as follows. May function in lipid transport from the endoplasmic reticulum and be involved in a wide array of cellular functions probably through regulation of the biogenesis of lipid microdomains at the plasma membrane. May regulate calcium efflux at the endoplasmic reticulum. The polypeptide is Sigma non-opioid intracellular receptor 1 (sigmar1) (Xenopus tropicalis (Western clawed frog)).